The primary structure comprises 609 residues: All-trans-retinol 13,14-reductase (609 aa).

The signal sequence occupies residues 1-21 (MWITALLLVVLLLVVVHRVYV).

It belongs to the carotenoid/retinoid oxidoreductase family. CrtISO subfamily. NAD(+) is required as a cofactor. The cofactor is NADP(+). FAD serves as cofactor. In terms of tissue distribution, highly expressed in liver, kidney and heart.

It is found in the endoplasmic reticulum membrane. It catalyses the reaction all-trans-13,14-dihydroretinol + A = all-trans-retinol + AH2. Functionally, catalyzes the saturation of all-trans-retinol to all-trans-13,14-dihydroretinol. Does not exhibit any activity toward all-trans-retinoic acid, nor 9-cis, 11-cis or 13-cis-retinol isomers. May play a role in the metabolism of vitamin A. Independently of retinol conversion, may regulate liver metabolism upstream of MLXIPL/ChREBP. May play a role in adipocyte differentiation. In Rattus norvegicus (Rat), this protein is All-trans-retinol 13,14-reductase (Retsat).